A 268-amino-acid chain; its full sequence is Eukaryotic translation initiation factor 3 subunit J (268 aa).

Disordered regions lie at residues 1–117 (MTPS…DLKH) and 219–242 (NEKM…KTKV). Over residues 26–44 (DEEDEEVLDSWDAAEDSEV) the composition is skewed to acidic residues. Residues 40 to 95 (EDSEVEREKAAKAAEAKAKAEAEAAAKKKSKAQRIEEHKAERRKNAEADSEEDEDE) adopt a coiled-coil conformation. Basic and acidic residues-rich tracts occupy residues 45–65 (EREK…EAAA) and 72–86 (QRIE…KNAE). The segment covering 87-99 (ADSEEDEDEDEDE) has biased composition (acidic residues). Basic and acidic residues-rich tracts occupy residues 100 to 117 (AEKR…DLKH) and 220 to 232 (EKMR…DKGS).

The protein belongs to the eIF-3 subunit J family. Component of the eukaryotic translation initiation factor 3 (eIF-3) complex.

It localises to the cytoplasm. In terms of biological role, component of the eukaryotic translation initiation factor 3 (eIF-3) complex, which is involved in protein synthesis of a specialized repertoire of mRNAs and, together with other initiation factors, stimulates binding of mRNA and methionyl-tRNAi to the 40S ribosome. The eIF-3 complex specifically targets and initiates translation of a subset of mRNAs involved in cell proliferation. This Aspergillus clavatus (strain ATCC 1007 / CBS 513.65 / DSM 816 / NCTC 3887 / NRRL 1 / QM 1276 / 107) protein is Eukaryotic translation initiation factor 3 subunit J (hcr1).